A 54-amino-acid polypeptide reads, in one-letter code: uncharacterized protein (54 aa).

This is an uncharacterized protein from Saccharolobus solfataricus (Sulfolobus solfataricus).